Consider the following 270-residue polypeptide: UPF0354 protein BC_4690 (270 aa).

The protein belongs to the UPF0354 family.

The polypeptide is UPF0354 protein BC_4690 (Bacillus cereus (strain ATCC 14579 / DSM 31 / CCUG 7414 / JCM 2152 / NBRC 15305 / NCIMB 9373 / NCTC 2599 / NRRL B-3711)).